The sequence spans 388 residues: Succinate--CoA ligase [ADP-forming] subunit beta (388 aa).

Positions 9-244 constitute an ATP-grasp domain; it reads KQLFARYGLP…QSQEDPREAQ (236 aa). ATP-binding positions include Lys-46, 53–55, Glu-99, Thr-102, and Glu-107; that span reads GRG. Mg(2+)-binding residues include Asn-199 and Asp-213. Substrate is bound by residues Asn-264 and 321–323; that span reads GIV.

It belongs to the succinate/malate CoA ligase beta subunit family. In terms of assembly, heterotetramer of two alpha and two beta subunits. It depends on Mg(2+) as a cofactor.

The catalysed reaction is succinate + ATP + CoA = succinyl-CoA + ADP + phosphate. It carries out the reaction GTP + succinate + CoA = succinyl-CoA + GDP + phosphate. Its pathway is carbohydrate metabolism; tricarboxylic acid cycle; succinate from succinyl-CoA (ligase route): step 1/1. In terms of biological role, succinyl-CoA synthetase functions in the citric acid cycle (TCA), coupling the hydrolysis of succinyl-CoA to the synthesis of either ATP or GTP and thus represents the only step of substrate-level phosphorylation in the TCA. The beta subunit provides nucleotide specificity of the enzyme and binds the substrate succinate, while the binding sites for coenzyme A and phosphate are found in the alpha subunit. The protein is Succinate--CoA ligase [ADP-forming] subunit beta of Salmonella dublin (strain CT_02021853).